The following is a 295-amino-acid chain: N-acetylmuramic acid 6-phosphate etherase (295 aa).

One can recognise an SIS domain in the interval 53-216; sequence AIQRFNNGGR…STMTMIGVGK (164 aa). The Proton donor role is filled by E81. Residue E112 is part of the active site.

The protein belongs to the GCKR-like family. MurNAc-6-P etherase subfamily. As to quaternary structure, homodimer.

The enzyme catalyses N-acetyl-D-muramate 6-phosphate + H2O = N-acetyl-D-glucosamine 6-phosphate + (R)-lactate. The protein operates within amino-sugar metabolism; N-acetylmuramate degradation. In terms of biological role, specifically catalyzes the cleavage of the D-lactyl ether substituent of MurNAc 6-phosphate, producing GlcNAc 6-phosphate and D-lactate. This is N-acetylmuramic acid 6-phosphate etherase from Staphylococcus epidermidis (strain ATCC 35984 / DSM 28319 / BCRC 17069 / CCUG 31568 / BM 3577 / RP62A).